Consider the following 185-residue polypeptide: Elongation factor P (185 aa).

It belongs to the elongation factor P family.

It localises to the cytoplasm. Its pathway is protein biosynthesis; polypeptide chain elongation. In terms of biological role, involved in peptide bond synthesis. Stimulates efficient translation and peptide-bond synthesis on native or reconstituted 70S ribosomes in vitro. Probably functions indirectly by altering the affinity of the ribosome for aminoacyl-tRNA, thus increasing their reactivity as acceptors for peptidyl transferase. This Paraburkholderia phymatum (strain DSM 17167 / CIP 108236 / LMG 21445 / STM815) (Burkholderia phymatum) protein is Elongation factor P.